The sequence spans 307 residues: UDP-N-acetylenolpyruvoylglucosamine reductase (307 aa).

In terms of domain architecture, FAD-binding PCMH-type spans 34–199 (RVGGPAQVLF…TAVRFRGTPS (166 aa)). Residue Arg-179 is part of the active site. Ser-228 functions as the Proton donor in the catalytic mechanism. Glu-298 is an active-site residue.

It belongs to the MurB family. It depends on FAD as a cofactor.

Its subcellular location is the cytoplasm. The enzyme catalyses UDP-N-acetyl-alpha-D-muramate + NADP(+) = UDP-N-acetyl-3-O-(1-carboxyvinyl)-alpha-D-glucosamine + NADPH + H(+). It functions in the pathway cell wall biogenesis; peptidoglycan biosynthesis. Cell wall formation. In Bradyrhizobium sp. (strain ORS 278), this protein is UDP-N-acetylenolpyruvoylglucosamine reductase.